We begin with the raw amino-acid sequence, 130 residues long: uncharacterized protein (130 aa).

Residues 1 to 104 are disordered; it reads MRPGSSPRAP…RGRWGLRGGP (104 aa). Over residues 88 to 97 the composition is skewed to low complexity; that stretch reads RRQPGPQRGR.

This is an uncharacterized protein from Homo sapiens (Human).